Reading from the N-terminus, the 483-residue chain is MGDVIVLYASPGMGHIVAMVELGKFIVHRYGPHKFSITILYTCGSIVDTASIPVYIRRISHSHPFISFRQFPRVTNNITRNISVPAITFDFIRQNDPHVRSALQEISKSATVRAFIIDLFCTSALPIGKEFNIPTYYFHTSGAAVLAAFLYLPKIDEQTKTTESFKDLRDTVFEFPGWKSPLKATHMVQLVLDRNDPAYSDMIYFCSHLPKSNGIIVNTFEELEPPSVLQAIAGGLCVPDGPTPPVYYVGPLIEEEKELSKDADAAEKEDCLSWLDKQPSRSVLFLCFGSMGSFPAAQLKEIANGLEASGQRFLWVVKKPPVEEKSKQVHGVDDFDLKGVLPEGFLERTADRGMVVKSWAPQVVVLKKESVGGFVTHCGWNSVLEAVVAGVPMIAWPLYAEQHMNRNVLVTDMEIAIGVEQRDEEGGFVSGEEVERRVRELMESEGGRALRERCKKLGEMASAALGETGSSTRNLVNFVSSIT.

Histidine 15 serves as the catalytic Proton acceptor. An an anthocyanidin-binding site is contributed by histidine 15. Catalysis depends on aspartate 118, which acts as the Charge relay. 8 residues coordinate UDP-alpha-D-glucose: threonine 140, alanine 360, glutamine 362, histidine 377, tryptophan 380, asparagine 381, serine 382, and glutamate 385. Alanine 400 contacts an anthocyanidin. Positions 401 and 402 each coordinate UDP-alpha-D-glucose.

Belongs to the UDP-glycosyltransferase family.

The enzyme catalyses phloretin + UDP-alpha-D-glucose = phlorizin + UDP + H(+). In terms of biological role, glycosyltransferase that possesses phloretin 2'-O-glycosyltransferase activity. Converts phloretin to phlorizin (phloretin 2'-O-glucoside), a potent antioxidant. Is specific for phloretin and does not possess glycosyltransferase activity toward naringenin, naringenin chalcone, eriodictyol, eriodictyol chalcone, apigenin, luteolin, kaempferol, quercetin, isoliquiritigenin, butein, caffeic acid, 2-coumaric acid, 3-coumaric acid, 3-hydroxybenzoic acid, 3,4-dihydroxybenzoic acid and 3,4-dihydroxyhydrocinnamic acid. Can glycosylate phloretin in the presence of UDP-glucose, UDP-xylose and UDP-galactose. The protein is Phloretin 2'-O-glucosyltransferase of Pyrus communis (Pear).